A 192-amino-acid chain; its full sequence is MRRINERLDEILPKITDASFRENKGLGNEIGFYIFDYDPKYEMLVREHIVYMQERLKNDSSLHIREFDLYEVMLEILEEKGYLQKNIDMEQKKGSDFILNATRKALRLTSNNDLVVQYITDRVQPNDIVFLTGVGKVFPIIRSHTILNNLHKAVDNVPLVMFFPGTYDGLELVLFGEIKDDNYYRAFQLIDK.

It belongs to the BrxB family.

Its function is as follows. BREX systems (bacteriophage exclusion) provide immunity against bacteriophage. Part of a type 1 BREX system. This system allows phage adsorption but prevents phage DNA replication, without degradation of the phage DNA. Methylation of bacterial DNA by PglX probably guides self/non-self discrimination. When the brxA-brxB-brxC-pglX and pglZ-brxL operons are transformed into a susceptible B.subtilis strain (BEST7003) they confer resistance to bacteriophages SPbeta, SP16, Zeta, phi3T and SP02 and partial protection to phages SP01 and SP82G (these include lytic and temperate phage). They do not protect against phages phi105, rho10 or rho14. Additionally confers a very slight reduction in efficiency of plasmid transformation. The sequence is that of BREX protein BrxB from Bacillus cereus (strain H3081.97).